The sequence spans 371 residues: Solute carrier family 35 member F6 (371 aa).

The N-terminal stretch at 1 to 25 (MAWTKHQLFLAGLMLVTGSINTLSA) is a signal peptide. 2 helical membrane-spanning segments follow: residues 48–68 (FLQA…FYLL) and 89–109 (LLFL…YVAL). In terms of domain architecture, EamA spans 104–160 (LMYVALNMTSASSFQMLRGAVIIFTGLFSVAFLGRRLVLSQWLGILATIAGLVVVGL). N-linked (GlcNAc...) asparagine glycosylation occurs at N110. A run of 7 helical transmembrane segments spans residues 117-137 (FQML…AFLG), 140-160 (LVLS…VVGL), 176-196 (VITG…QMVL), 216-236 (GLFG…IPAG), 261-281 (LIAV…FAGI), 295-312 (LDSL…ALGW), and 317-336 (ALQI…YNGL). Residues 347-371 (GRPPAEESEQERLLGGSRTPINDAS) are disordered. T365 bears the Phosphothreonine mark.

Belongs to the SLC35F solute transporter family. Interacts with SLC25A5.

Its subcellular location is the mitochondrion. The protein localises to the lysosome membrane. In terms of biological role, involved in the maintenance of mitochondrial membrane potential in pancreatic ductal adenocarcinoma (PDAC) cells. Promotes pancreatic ductal adenocarcinoma (PDAC) cell growth. May play a role as a nucleotide-sugar transporter. The sequence is that of Solute carrier family 35 member F6 (SLC35F6) from Pongo abelii (Sumatran orangutan).